Here is a 101-residue protein sequence, read N- to C-terminus: Protein Tat (101 aa).

The segment at 1–24 (MDPVDPNLEPWNHPGSQPKTPCNK) is interaction with human CREBBP. A transactivation region spans residues 1-48 (MDPVDPNLEPWNHPGSQPKTPCNKCFCKVCCWHCQVCFLNKGLGISYG). Positions 22, 25, and 27 each coordinate Zn(2+). The segment at 22–37 (CNKCFCKVCCWHCQVC) is cysteine-rich. Lys-28 is modified (N6-acetyllysine; by host PCAF). The Zn(2+) site is built by Cys-30, His-33, Cys-34, and Cys-37. A core region spans residues 38–48 (FLNKGLGISYG). Basic residues predominate over residues 48–57 (GRKKRKHRRG). Positions 48–101 (GRKKRKHRRGTPQSSKGHQDPVPKQPLPTTRGNPTGPKESKKEVASKAEADQCD) are disordered. A Nuclear localization signal, RNA-binding (TAR), and protein transduction motif is present at residues 49-57 (RKKRKHRRG). An interaction with the host capping enzyme RNGTT region spans residues 49–86 (RKKRKHRRGTPQSSKGHQDPVPKQPLPTTRGNPTGPKE). N6-acetyllysine; by host EP300 and GCN5L2 is present on residues Lys-50 and Lys-51. An Asymmetric dimethylarginine; by host PRMT6 modification is found at Arg-52. A Glycyl lysine isopeptide (Lys-Gly) (interchain with G-Cter in ubiquitin) cross-link involves residue Lys-71. The span at 85–101 (KESKKEVASKAEADQCD) shows a compositional bias: basic and acidic residues.

The protein belongs to the lentiviruses Tat family. In terms of assembly, interacts with host CCNT1. Associates with the P-TEFb complex composed at least of Tat, P-TEFb (CDK9 and CCNT1), TAR RNA, RNA Pol II. Recruits the HATs CREBBP, TAF1/TFIID, EP300, PCAF and GCN5L2. Interacts with host KAT5/Tip60; this interaction targets the latter to degradation. Interacts with the host deacetylase SIRT1. Interacts with host capping enzyme RNGTT; this interaction stimulates RNGTT. Binds to host KDR, and to the host integrins ITGAV/ITGB3 and ITGA5/ITGB1. Interacts with host KPNB1/importin beta-1 without previous binding to KPNA1/importin alpha-1. Interacts with EIF2AK2. Interacts with host nucleosome assembly protein NAP1L1; this interaction may be required for the transport of Tat within the nucleus, since the two proteins interact at the nuclear rim. Interacts with host C1QBP/SF2P32; this interaction involves lysine-acetylated Tat. Interacts with the host chemokine receptors CCR2, CCR3 and CXCR4. Interacts with host DPP4/CD26; this interaction may trigger an anti-proliferative effect. Interacts with host LDLR. Interacts with the host extracellular matrix metalloproteinase MMP1. Interacts with host PRMT6; this interaction mediates Tat's methylation. Interacts with, and is ubiquitinated by MDM2/Hdm2. Interacts with host PSMC3 and HTATIP2. Interacts with STAB1; this interaction may overcome SATB1-mediated repression of IL2 and IL2RA (interleukin) in T cells by binding to the same domain than HDAC1. Interacts (when acetylated) with human CDK13, thereby increasing HIV-1 mRNA splicing and promoting the production of the doubly spliced HIV-1 protein Nef. Interacts with host TBP; this interaction modulates the activity of transcriptional pre-initiation complex. Interacts with host RELA. Interacts with host PLSCR1; this interaction negatively regulates Tat transactivation activity by altering its subcellular distribution. Asymmetrical arginine methylation by host PRMT6 seems to diminish the transactivation capacity of Tat and affects the interaction with host CCNT1. In terms of processing, acetylation by EP300, CREBBP, GCN5L2/GCN5 and PCAF regulates the transactivation activity of Tat. EP300-mediated acetylation of Lys-50 promotes dissociation of Tat from the TAR RNA through the competitive binding to PCAF's bromodomain. In addition, the non-acetylated Tat's N-terminus can also interact with PCAF. PCAF-mediated acetylation of Lys-28 enhances Tat's binding to CCNT1. Lys-50 is deacetylated by SIRT1. Post-translationally, polyubiquitination by host MDM2 does not target Tat to degradation, but activates its transactivation function and fosters interaction with CCNT1 and TAR RNA. Phosphorylated by EIF2AK2 on serine and threonine residues adjacent to the basic region important for TAR RNA binding and function. Phosphorylation of Tat by EIF2AK2 is dependent on the prior activation of EIF2AK2 by dsRNA.

It localises to the host nucleus. It is found in the host nucleolus. The protein localises to the host cytoplasm. Its subcellular location is the secreted. In terms of biological role, transcriptional activator that increases RNA Pol II processivity, thereby increasing the level of full-length viral transcripts. Recognizes a hairpin structure at the 5'-LTR of the nascent viral mRNAs referred to as the transactivation responsive RNA element (TAR) and recruits the cyclin T1-CDK9 complex (P-TEFb complex) that will in turn hyperphosphorylate the RNA polymerase II to allow efficient elongation. The CDK9 component of P-TEFb and other Tat-activated kinases hyperphosphorylate the C-terminus of RNA Pol II that becomes stabilized and much more processive. Other factors such as HTATSF1/Tat-SF1, SUPT5H/SPT5, and HTATIP2 are also important for Tat's function. Besides its effect on RNA Pol II processivity, Tat induces chromatin remodeling of proviral genes by recruiting the histone acetyltransferases (HATs) CREBBP, EP300 and PCAF to the chromatin. This also contributes to the increase in proviral transcription rate, especially when the provirus integrates in transcriptionally silent region of the host genome. To ensure maximal activation of the LTR, Tat mediates nuclear translocation of NF-kappa-B by interacting with host RELA. Through its interaction with host TBP, Tat may also modulate transcription initiation. Tat can reactivate a latently infected cell by penetrating in it and transactivating its LTR promoter. In the cytoplasm, Tat is thought to act as a translational activator of HIV-1 mRNAs. Functionally, extracellular circulating Tat can be endocytosed by surrounding uninfected cells via the binding to several surface receptors such as CD26, CXCR4, heparan sulfate proteoglycans (HSPG) or LDLR. Neurons are rarely infected, but they internalize Tat via their LDLR. Through its interaction with nuclear HATs, Tat is potentially able to control the acetylation-dependent cellular gene expression. Modulates the expression of many cellular genes involved in cell survival, proliferation or in coding for cytokines or cytokine receptors. Tat plays a role in T-cell and neurons apoptosis. Tat induced neurotoxicity and apoptosis probably contribute to neuroAIDS. Circulating Tat also acts as a chemokine-like and/or growth factor-like molecule that binds to specific receptors on the surface of the cells, affecting many cellular pathways. In the vascular system, Tat binds to ITGAV/ITGB3 and ITGA5/ITGB1 integrins dimers at the surface of endothelial cells and competes with bFGF for heparin-binding sites, leading to an excess of soluble bFGF. The polypeptide is Protein Tat (Homo sapiens (Human)).